We begin with the raw amino-acid sequence, 111 residues long: Large ribosomal subunit protein uL29 (111 aa).

The tract at residues Met-1–Asn-85 is large ribosomal subunit protein uL29. Positions Ala-86 to Lys-111 are unknown.

Belongs to the universal ribosomal protein uL29 family.

The chain is Large ribosomal subunit protein uL29 from Mycoplasma pneumoniae (strain ATCC 29342 / M129 / Subtype 1) (Mycoplasmoides pneumoniae).